An 876-amino-acid polypeptide reads, in one-letter code: Alanine--tRNA ligase (876 aa).

Residues H560, H564, C662, and H666 each coordinate Zn(2+).

It belongs to the class-II aminoacyl-tRNA synthetase family. It depends on Zn(2+) as a cofactor.

The protein resides in the cytoplasm. It carries out the reaction tRNA(Ala) + L-alanine + ATP = L-alanyl-tRNA(Ala) + AMP + diphosphate. Catalyzes the attachment of alanine to tRNA(Ala) in a two-step reaction: alanine is first activated by ATP to form Ala-AMP and then transferred to the acceptor end of tRNA(Ala). Also edits incorrectly charged Ser-tRNA(Ala) and Gly-tRNA(Ala) via its editing domain. The sequence is that of Alanine--tRNA ligase from Synechococcus elongatus (strain ATCC 33912 / PCC 7942 / FACHB-805) (Anacystis nidulans R2).